The following is a 203-amino-acid chain: Bone marrow stromal antigen 2 (203 aa).

Topologically, residues 1 to 26 (MAPTFYHYHPLPMDQKEPGCGIRWRC) are cytoplasmic. Residues 27 to 47 (LAAASVLILVALVIPLIIFAV) traverse the membrane as a helical; Signal-anchor for type II membrane protein segment. The Extracellular portion of the chain corresponds to 48–183 (KANSEACRDG…EASITSKQNS (136 aa)). N-linked (GlcNAc...) asparagine glycosylation is found at N66 and N93. Positions 66 to 178 (NTTRLLQRQL…LRTAEEASIT (113 aa)) form a coiled coil. A lipid anchor (GPI-anchor amidated serine) is attached at S183. A propeptide spans 184 to 203 (AGSMAVSSLLVLAVPLFLLF) (removed in mature form).

Parallel homodimer; disulfide-linked. May form homotetramers under reducing conditions. Isoform 1 and isoform 2 form homodimers and also heterodimers with each other. Dimerization is essential for its antiviral activity. Interacts (via cytoplasmic domain) with ARHGAP44. Interacts with MMP14 (via C-terminal cytoplasmic tail). Interacts with LILRA4/ILT7. Interacts with RNF115. In terms of processing, the GPI anchor is essential for its antiviral activity.

It localises to the golgi apparatus. It is found in the trans-Golgi network. The protein localises to the cell membrane. Its subcellular location is the late endosome. The protein resides in the membrane raft. It localises to the cytoplasm. It is found in the apical cell membrane. IFN-induced antiviral host restriction factor which efficiently blocks the release of diverse mammalian enveloped viruses by directly tethering nascent virions to the membranes of infected cells. Acts as a direct physical tether, holding virions to the cell membrane and linking virions to each other. The tethered virions can be internalized by endocytosis and subsequently degraded or they can remain on the cell surface. In either case, their spread as cell-free virions is restricted. Its target viruses belong to diverse families, including retroviridae: human immunodeficiency virus type 1 (HIV-1), mouse mammary tumor virus (MMTV) and murine leukemia virus (MLV), filoviridae: ebola virus (EBOV), arenaviridae: lassa virus (LASV), and rhabdoviridae: vesicular stomatitis virus (VSV). Can inhibit cell surface proteolytic activity of MMP14 causing decreased activation of MMP15 which results in inhibition of cell growth and migration. Can stimulate signaling by LILRA4/ILT7 and consequently provide negative feedback to the production of IFN by plasmacytoid dendritic cells in response to viral infection. Plays a role in the organization of the subapical actin cytoskeleton in polarized epithelial cells. The chain is Bone marrow stromal antigen 2 (Bst2) from Cricetulus griseus (Chinese hamster).